A 240-amino-acid chain; its full sequence is Lipoprotein signal peptidase (240 aa).

Transmembrane regions (helical) follow at residues 38–58 (LIWK…TSFL), 73–93 (LIPG…FGTL), 98–118 (PSLV…VLLF), and 120–140 (SNYL…SNII). Active-site residues include Asp162 and Asp179. Residues 177–197 (FPDTFVIIGMIFVGIQIIISF) traverse the membrane as a helical segment.

It belongs to the peptidase A8 family.

It is found in the cell membrane. The enzyme catalyses Release of signal peptides from bacterial membrane prolipoproteins. Hydrolyzes -Xaa-Yaa-Zaa-|-(S,diacylglyceryl)Cys-, in which Xaa is hydrophobic (preferably Leu), and Yaa (Ala or Ser) and Zaa (Gly or Ala) have small, neutral side chains.. It participates in protein modification; lipoprotein biosynthesis (signal peptide cleavage). Functionally, this protein specifically catalyzes the removal of signal peptides from prolipoproteins. The chain is Lipoprotein signal peptidase from Malacoplasma penetrans (strain HF-2) (Mycoplasma penetrans).